The chain runs to 344 residues: 2,3,4,5-tetrahydropyridine-2,6-dicarboxylate N-succinyltransferase (344 aa).

E205 contributes to the Mg(2+) binding site. The active-site Acyl-anhydride intermediate is E221. Residues R223, G238, S241, A264, 279–280, 287–289, K304, and 317–320 each bind succinyl-CoA; these read EA, GTK, and RRNS.

This sequence belongs to the type 2 tetrahydrodipicolinate N-succinyltransferase family. In terms of assembly, homotrimer. Requires Magnesium ions are not essential for catalysis. as cofactor.

Its subcellular location is the cytoplasm. It catalyses the reaction (S)-2,3,4,5-tetrahydrodipicolinate + succinyl-CoA + H2O = (S)-2-succinylamino-6-oxoheptanedioate + CoA. It participates in amino-acid biosynthesis; L-lysine biosynthesis via DAP pathway; LL-2,6-diaminopimelate from (S)-tetrahydrodipicolinate (succinylase route): step 1/3. With respect to regulation, weakly inhibited by D-2-aminopimelate. Its function is as follows. Catalyzes the conversion of the cyclic tetrahydrodipicolinate (THDP) into the acyclic N-succinyl-L-2-amino-6-oxopimelate using succinyl-CoA. Displays succinyl transferase activity with L-2-aminopimelate and succinyl-CoA as substrates. The chain is 2,3,4,5-tetrahydropyridine-2,6-dicarboxylate N-succinyltransferase from Pseudomonas aeruginosa (strain ATCC 15692 / DSM 22644 / CIP 104116 / JCM 14847 / LMG 12228 / 1C / PRS 101 / PAO1).